We begin with the raw amino-acid sequence, 512 residues long: MTALTLTPGSATLEHLARIYFDESPVRLDPACRPAVEAAAARIRAAAAGDVPVYGVNTGFGKLASLKVAPQDTATLQRNLILSHCCGVGAPIPRRMARLMMVLKLLSLGRGASGVRWELITLLQEMLARDVTPVIPVQGSVGASGDLAPLAHMTAVIIGAGEAEYQGQRLPGAEALARAGLTPIALGPKEGLAFINGTQFSTAFALAGLFGAWRAATSSLVTAALSTDAIMGSTAPLQPEIHALRGHRGQIDAAARMRALLDGSEIRESHREGDTRVQDPYCIRCQPQVTGAAMDVLRQAAQTLEIEANAATDNPLVLAEADMIVSGGNFHAEPVGFAADLIALALSEIGAIAQRRVALMVDPTLSFDLPPFLTPKPGLNSGLMIAEVTTAALMSENKHLANPCVTDSTPTSANQEDHVSMAAHGAVRLGRMVENLHYILGVELLCAAQGIEFRAPLQTSTALQAAVARLRAEVPRLEEDRYMAPEIETAARLVGAGALLDVVGIDMGGLRP.

The 5-imidazolinone (Ala-Gly) cross-link spans 143 to 145 (ASG). 2,3-didehydroalanine (Ser) is present on Ser-144.

It belongs to the PAL/histidase family. In terms of processing, contains an active site 4-methylidene-imidazol-5-one (MIO), which is formed autocatalytically by cyclization and dehydration of residues Ala-Ser-Gly.

The protein localises to the cytoplasm. It catalyses the reaction L-histidine = trans-urocanate + NH4(+). It participates in amino-acid degradation; L-histidine degradation into L-glutamate; N-formimidoyl-L-glutamate from L-histidine: step 1/3. This chain is Histidine ammonia-lyase, found in Ruegeria pomeroyi (strain ATCC 700808 / DSM 15171 / DSS-3) (Silicibacter pomeroyi).